The chain runs to 802 residues: Mitochondrial inner membrane m-AAA protease component AFG3L2 (802 aa).

A mitochondrion-targeting transit peptide spans 1–38; sequence MAHRCLLLWSRGGCRRGLPPLLVPRGCLGPDRRPCLRT. The propeptide at 39-66 is removed in mature form; that stretch reads LYQYATVQTASSRRSLLRDVIAAYQRFC. The interval 76–124 is disordered; it reads YFPNGKNGKKASEPKEAVGEKKEPQPSGPQPSGGAGGGGGKRRGKKEDS. Residues 85–99 show a composition bias toward basic and acidic residues; sequence KASEPKEAVGEKKEP. Lys-116 carries the post-translational modification N6-succinyllysine. The next 2 membrane-spanning stretches (helical) occupy residues 142-162 and 250-270; these read FRMY…YFVF and GSFL…LYTI. ATP contacts are provided by Val-309, Ala-310, Thr-351, Gly-352, Lys-353, Thr-354, Leu-355, and His-489. His-573 contacts Zn(2+). Glu-574 is a catalytic residue. Zn(2+) is bound by residues His-577 and Asp-648. Residues 759–802 form a disordered region; that stretch reads VEGTGSLDEDTSLPEGLQDWNKEREKEEKKEKEKEEPLNEKVVS. A compositionally biased stretch (basic and acidic residues) spans 778-802; sequence WNKEREKEEKKEKEKEEPLNEKVVS.

In the N-terminal section; belongs to the AAA ATPase family. This sequence in the C-terminal section; belongs to the peptidase M41 family. In terms of assembly, homohexamer. Forms heterohexamers with SPG7 and AFG3L1. The m-AAA protease is either composed of homohexamers of AFG3L2 or heterohexamers of AFG3L1, AFG3L2 and/or SPG7. Interacts with MAIP1. Interacts with DNAJC19. Interacts with PHB2. Zn(2+) serves as cofactor. Upon import into the mitochondrion, the N-terminal transit peptide is cleaved to generate an intermediate form which undergoes autocatalytic proteolytic processing to generate the proteolytically active mature form. Highly expressed in the cerebellar Purkinje cells.

It localises to the mitochondrion inner membrane. It carries out the reaction ATP + H2O = ADP + phosphate + H(+). Its function is as follows. Catalytic component of the m-AAA protease, a protease that plays a key role in proteostasis of inner mitochondrial membrane proteins, and which is essential for axonal and neuron development. AFG3L2 possesses both ATPase and protease activities: the ATPase activity is required to unfold substrates, threading them into the internal proteolytic cavity for hydrolysis into small peptide fragments. The m-AAA protease carries out protein quality control in the inner membrane of the mitochondria by mediating degradation of mistranslated or misfolded polypeptides. The m-AAA protease complex also promotes the processing and maturation of mitochondrial proteins, such as MRPL32/bL32m, PINK1 and SP7. Mediates protein maturation of the mitochondrial ribosomal subunit MRPL32/bL32m by catalyzing the cleavage of the presequence of MRPL32/bL32m prior to assembly into the mitochondrial ribosome. Required for SPG7 maturation into its active mature form after SPG7 cleavage by mitochondrial-processing peptidase (MPP). Required for the maturation of PINK1 into its 52kDa mature form after its cleavage by mitochondrial-processing peptidase (MPP). Acts as a regulator of calcium in neurons by mediating degradation of SMDT1/EMRE before its assembly with the uniporter complex, limiting the availability of SMDT1/EMRE for MCU assembly and promoting efficient assembly of gatekeeper subunits with MCU. Promotes the proteolytic degradation of GHITM upon hyperpolarization of mitochondria: progressive GHITM degradation leads to respiratory complex I degradation and broad reshaping of the mitochondrial proteome by AFG3L2. Also acts as a regulator of mitochondrial glutathione homeostasis by mediating cleavage and degradation of SLC25A39. SLC25A39 cleavage is prevented when SLC25A39 binds iron-sulfur. Involved in the regulation of OMA1-dependent processing of OPA1. May act by mediating processing of OMA1 precursor, participating in OMA1 maturation. The polypeptide is Mitochondrial inner membrane m-AAA protease component AFG3L2 (Mus musculus (Mouse)).